The following is an 884-amino-acid chain: Protein translocase subunit SecA (884 aa).

Residues Q83, 101 to 105, and D491 each bind ATP; that span reads GEGKT.

This sequence belongs to the SecA family.

Its subcellular location is the plastid. It is found in the chloroplast stroma. The protein localises to the chloroplast thylakoid membrane. It carries out the reaction ATP + H2O + cellular proteinSide 1 = ADP + phosphate + cellular proteinSide 2.. Its function is as follows. Has a central role in coupling the hydrolysis of ATP to the transfer of proteins across the thylakoid membrane. The protein is Protein translocase subunit SecA of Porphyra purpurea (Red seaweed).